Here is a 242-residue protein sequence, read N- to C-terminus: Ubiquinone biosynthesis O-methyltransferase (242 aa).

The S-adenosyl-L-methionine site is built by Arg-44, Gly-64, Asp-85, and Met-129.

The protein belongs to the methyltransferase superfamily. UbiG/COQ3 family.

It catalyses the reaction a 3-demethylubiquinol + S-adenosyl-L-methionine = a ubiquinol + S-adenosyl-L-homocysteine + H(+). The catalysed reaction is a 3-(all-trans-polyprenyl)benzene-1,2-diol + S-adenosyl-L-methionine = a 2-methoxy-6-(all-trans-polyprenyl)phenol + S-adenosyl-L-homocysteine + H(+). The protein operates within cofactor biosynthesis; ubiquinone biosynthesis. O-methyltransferase that catalyzes the 2 O-methylation steps in the ubiquinone biosynthetic pathway. This Citrobacter koseri (strain ATCC BAA-895 / CDC 4225-83 / SGSC4696) protein is Ubiquinone biosynthesis O-methyltransferase.